Reading from the N-terminus, the 144-residue chain is Large ribosomal subunit protein uL15 (144 aa).

The segment at 1 to 58 is disordered; it reads MRLNTLAPAAGSKHAPKRVGRGIGSGLGKTGGRGHKGQKSRSGGKVRPGFEGGQMPLK. Gly residues predominate over residues 21 to 31; the sequence is RGIGSGLGKTG. Over residues 32 to 44 the composition is skewed to basic residues; it reads GRGHKGQKSRSGG.

It belongs to the universal ribosomal protein uL15 family. In terms of assembly, part of the 50S ribosomal subunit.

Functionally, binds to the 23S rRNA. The sequence is that of Large ribosomal subunit protein uL15 from Vibrio parahaemolyticus serotype O3:K6 (strain RIMD 2210633).